Consider the following 100-residue polypeptide: Proline-rich protein 15-like protein (100 aa).

A disordered region spans residues 26–100 (PDTYTQSEGG…LFDDREGKGQ (75 aa)). Over residues 53–62 (RLEKIVDKNT) the composition is skewed to basic and acidic residues.

The protein belongs to the PRR15 family.

The protein is Proline-rich protein 15-like protein (PRR15L) of Bos taurus (Bovine).